Here is a 356-residue protein sequence, read N- to C-terminus: Histidinol-phosphate aminotransferase (356 aa).

At Lys-208 the chain carries N6-(pyridoxal phosphate)lysine.

The protein belongs to the class-II pyridoxal-phosphate-dependent aminotransferase family. Histidinol-phosphate aminotransferase subfamily. Homodimer. Pyridoxal 5'-phosphate serves as cofactor.

It carries out the reaction L-histidinol phosphate + 2-oxoglutarate = 3-(imidazol-4-yl)-2-oxopropyl phosphate + L-glutamate. Its pathway is amino-acid biosynthesis; L-histidine biosynthesis; L-histidine from 5-phospho-alpha-D-ribose 1-diphosphate: step 7/9. This Lactococcus lactis subsp. cremoris (strain SK11) protein is Histidinol-phosphate aminotransferase.